A 192-amino-acid polypeptide reads, in one-letter code: Leucine-rich repeat-containing protein 51 (192 aa).

3 LRR repeats span residues 49–71 (SLTQSLWLNNNVLNDLRDFNQVA), 80–101 (NLAWIDLSFNDLTSIDPVLTTF), and 103–124 (NLSVLYLHGNSIQRLGEVNKLA). Positions 137–175 (NPMEEEKGYRQYVLCTLSRITTFDFSGVTKADRTTAEVW) constitute an LRRCT domain.

The protein localises to the cytoplasm. This chain is Leucine-rich repeat-containing protein 51, found in Homo sapiens (Human).